We begin with the raw amino-acid sequence, 107 residues long: UPF0473 protein Ldb1604 (107 aa).

It belongs to the UPF0473 family.

The protein is UPF0473 protein Ldb1604 of Lactobacillus delbrueckii subsp. bulgaricus (strain ATCC 11842 / DSM 20081 / BCRC 10696 / JCM 1002 / NBRC 13953 / NCIMB 11778 / NCTC 12712 / WDCM 00102 / Lb 14).